The following is a 615-amino-acid chain: ABC transporter G family member 22 (615 aa).

In terms of domain architecture, ABC transporter spans 31 to 279; sequence ITFKDLAYSV…EIGFPFPDQT (249 aa). An ATP-binding site is contributed by 67 to 74; it reads GPSGSGKT. The 247-residue stretch at 364 to 610 folds into the ABC transmembrane type-2 domain; sequence SNCLVRFAVA…TMVFLCLHYF (247 aa). Helical transmembrane passes span 370–390, 400–420, 442–462, 477–497, 508–528, and 587–607; these read FAVAVFVGLLFGACFSGLGMD, VLFYLVINMILQPFASISLFI, LALMFFEILACIGTAFILGTI, FFAMAILTLAHLAGDFFMLII, FAVGAGVATIYQLFAGFFVPI, and INLIIVSSFAFAFFTMVFLCL.

This sequence belongs to the ABC transporter superfamily. ABCG family. Eye pigment precursor importer (TC 3.A.1.204) subfamily.

The protein resides in the membrane. May be involved in cell migration. The protein is ABC transporter G family member 22 (abcG22) of Dictyostelium discoideum (Social amoeba).